The chain runs to 476 residues: Inosine-5'-monophosphate dehydrogenase (476 aa).

CBS domains are found at residues I93 to I151 and M152 to E211. NAD(+) is bound by residues D242 and G292–G294. K(+) contacts are provided by G294 and G296. S297 is a binding site for IMP. A K(+)-binding site is contributed by C299. Residue C299 is the Thioimidate intermediate of the active site. IMP is bound by residues D334–G336, G357–Y358, and Y381–G385. R398 functions as the Proton acceptor in the catalytic mechanism. Residue E408 coordinates IMP. K(+) is bound at residue E462.

The protein belongs to the IMPDH/GMPR family. As to quaternary structure, homotetramer. K(+) is required as a cofactor.

It catalyses the reaction IMP + NAD(+) + H2O = XMP + NADH + H(+). It participates in purine metabolism; XMP biosynthesis via de novo pathway; XMP from IMP: step 1/1. Mycophenolic acid (MPA) is a non-competitive inhibitor that prevents formation of the closed enzyme conformation by binding to the same site as the amobile flap. In contrast, mizoribine monophosphate (MZP) is a competitive inhibitor that induces the closed conformation. MPA is a potent inhibitor of mammalian IMPDHs but a poor inhibitor of the bacterial enzymes. MZP is a more potent inhibitor of bacterial IMPDH. Catalyzes the conversion of inosine 5'-phosphate (IMP) to xanthosine 5'-phosphate (XMP), the first committed and rate-limiting step in the de novo synthesis of guanine nucleotides, and therefore plays an important role in the regulation of cell growth. This is Inosine-5'-monophosphate dehydrogenase from Korarchaeum cryptofilum (strain OPF8).